We begin with the raw amino-acid sequence, 403 residues long: Argininosuccinate synthase (403 aa).

ATP is bound by residues 13–21 and Ala40; that span reads AYSGGLDTS. 2 residues coordinate L-citrulline: Tyr91 and Ser96. Gly121 is an ATP binding site. L-aspartate is bound by residues Thr123, Asn127, and Asp128. Asn127 is a binding site for L-citrulline. L-citrulline-binding residues include Arg131, Ser180, Ser189, Glu265, and Tyr277.

Belongs to the argininosuccinate synthase family. Type 1 subfamily. In terms of assembly, homotetramer.

The protein resides in the cytoplasm. The catalysed reaction is L-citrulline + L-aspartate + ATP = 2-(N(omega)-L-arginino)succinate + AMP + diphosphate + H(+). The protein operates within amino-acid biosynthesis; L-arginine biosynthesis; L-arginine from L-ornithine and carbamoyl phosphate: step 2/3. The protein is Argininosuccinate synthase of Leptospira borgpetersenii serovar Hardjo-bovis (strain JB197).